A 60-amino-acid chain; its full sequence is uncharacterized protein (60 aa).

This sequence to E.coli YjeQ and H.influenzae HI_1714.

This is an uncharacterized protein from Azotobacter vinelandii.